Consider the following 606-residue polypeptide: Phosphomethylpyrimidine synthase (606 aa).

Over residues M1–Q13 the composition is skewed to polar residues. Disordered regions lie at residues M1–D49 and A105–P147. Positions N14–G31 are enriched in low complexity. A compositionally biased stretch (basic and acidic residues) spans A105–K117. Residues N213, M242, Y271, H307, S327–G329, D368–R371, and E407 each bind substrate. Residue H411 coordinates Zn(2+). Position 434 (Y434) interacts with substrate. Zn(2+) is bound at residue H475. [4Fe-4S] cluster is bound by residues C555, C558, and C563.

This sequence belongs to the ThiC family. Requires [4Fe-4S] cluster as cofactor.

The enzyme catalyses 5-amino-1-(5-phospho-beta-D-ribosyl)imidazole + S-adenosyl-L-methionine = 4-amino-2-methyl-5-(phosphooxymethyl)pyrimidine + CO + 5'-deoxyadenosine + formate + L-methionine + 3 H(+). It functions in the pathway cofactor biosynthesis; thiamine diphosphate biosynthesis. Its function is as follows. Catalyzes the synthesis of the hydroxymethylpyrimidine phosphate (HMP-P) moiety of thiamine from aminoimidazole ribotide (AIR) in a radical S-adenosyl-L-methionine (SAM)-dependent reaction. The protein is Phosphomethylpyrimidine synthase of Streptomyces griseus subsp. griseus (strain JCM 4626 / CBS 651.72 / NBRC 13350 / KCC S-0626 / ISP 5235).